The sequence spans 197 residues: Holliday junction branch migration complex subunit RuvA (197 aa).

Residues 1–64 (MIASVRGTLI…EDALTLYGFK (64 aa)) are domain I. The domain II stretch occupies residues 65-145 (TVEQRQLFET…GLPVAPGVSP (81 aa)). Residues 146 to 153 (AVAAVNAE) are flexible linker. The interval 153–197 (ELSEMLVSLGFSSAEASTAIAALPPDAPLDLEERLRLALRYFGAR) is domain III.

Belongs to the RuvA family. As to quaternary structure, homotetramer. Forms an RuvA(8)-RuvB(12)-Holliday junction (HJ) complex. HJ DNA is sandwiched between 2 RuvA tetramers; dsDNA enters through RuvA and exits via RuvB. An RuvB hexamer assembles on each DNA strand where it exits the tetramer. Each RuvB hexamer is contacted by two RuvA subunits (via domain III) on 2 adjacent RuvB subunits; this complex drives branch migration. In the full resolvosome a probable DNA-RuvA(4)-RuvB(12)-RuvC(2) complex forms which resolves the HJ.

It is found in the cytoplasm. In terms of biological role, the RuvA-RuvB-RuvC complex processes Holliday junction (HJ) DNA during genetic recombination and DNA repair, while the RuvA-RuvB complex plays an important role in the rescue of blocked DNA replication forks via replication fork reversal (RFR). RuvA specifically binds to HJ cruciform DNA, conferring on it an open structure. The RuvB hexamer acts as an ATP-dependent pump, pulling dsDNA into and through the RuvAB complex. HJ branch migration allows RuvC to scan DNA until it finds its consensus sequence, where it cleaves and resolves the cruciform DNA. The protein is Holliday junction branch migration complex subunit RuvA of Roseiflexus castenholzii (strain DSM 13941 / HLO8).